A 232-amino-acid chain; its full sequence is Small ribosomal subunit protein uS2 (232 aa).

Belongs to the universal ribosomal protein uS2 family.

The chain is Small ribosomal subunit protein uS2 from Carboxydothermus hydrogenoformans (strain ATCC BAA-161 / DSM 6008 / Z-2901).